Reading from the N-terminus, the 126-residue chain is Large ribosomal subunit protein bL12 (126 aa).

This sequence belongs to the bacterial ribosomal protein bL12 family. As to quaternary structure, homodimer. Part of the ribosomal stalk of the 50S ribosomal subunit. Forms a multimeric L10(L12)X complex, where L10 forms an elongated spine to which 2 to 4 L12 dimers bind in a sequential fashion. Binds GTP-bound translation factors.

Its function is as follows. Forms part of the ribosomal stalk which helps the ribosome interact with GTP-bound translation factors. Is thus essential for accurate translation. This Chlorobaculum tepidum (strain ATCC 49652 / DSM 12025 / NBRC 103806 / TLS) (Chlorobium tepidum) protein is Large ribosomal subunit protein bL12.